A 337-amino-acid chain; its full sequence is Aspartate carbamoyltransferase catalytic subunit (337 aa).

Arg-59 and Thr-60 together coordinate carbamoyl phosphate. Lys-87 serves as a coordination point for L-aspartate. 3 residues coordinate carbamoyl phosphate: Arg-109, His-142, and Gln-145. L-aspartate is bound by residues Arg-182 and Arg-253. The carbamoyl phosphate site is built by Gly-294 and Pro-295.

Belongs to the aspartate/ornithine carbamoyltransferase superfamily. ATCase family. In terms of assembly, heterododecamer (2C3:3R2) of six catalytic PyrB chains organized as two trimers (C3), and six regulatory PyrI chains organized as three dimers (R2).

It carries out the reaction carbamoyl phosphate + L-aspartate = N-carbamoyl-L-aspartate + phosphate + H(+). The protein operates within pyrimidine metabolism; UMP biosynthesis via de novo pathway; (S)-dihydroorotate from bicarbonate: step 2/3. In terms of biological role, catalyzes the condensation of carbamoyl phosphate and aspartate to form carbamoyl aspartate and inorganic phosphate, the committed step in the de novo pyrimidine nucleotide biosynthesis pathway. The sequence is that of Aspartate carbamoyltransferase catalytic subunit from Prochlorococcus marinus (strain MIT 9211).